A 105-amino-acid polypeptide reads, in one-letter code: MNPSEMQRKAPPRRRRHRNRAPLTHKMNKMVTSEEQMKLPSTKKAEPPTWAQLKKLTQLATKYLENTKVTQTPESMLLAALMIVSMVSAGVPNSSEETATIENGP.

The segment at 1 to 49 (MNPSEMQRKAPPRRRRHRNRAPLTHKMNKMVTSEEQMKLPSTKKAEPPT) is disordered. The segment covering 10 to 20 (APPRRRRHRNR) has biased composition (basic residues). Positions 13-20 (RRRRHRNR) match the Nuclear localization signal motif. Residues 50–59 (WAQLKKLTQL) carry the Nuclear export signal motif.

As to quaternary structure, forms homodimers, homotrimers, and homotetramers via a C-terminal domain. Associates with XPO1 and with ZNF145. Expressed at higher level in placenta, expressed at lower level in several organs and cell lines.

It localises to the cytoplasm. It is found in the nucleus. The protein localises to the nucleolus. In terms of biological role, retroviral replication requires the nuclear export and translation of unspliced, singly-spliced and multiply-spliced derivatives of the initial genomic transcript. Rec interacts with a highly structured RNA element (RcRE) present in the viral 3'LTR and recruits the cellular nuclear export machinery. This permits export to the cytoplasm of unspliced genomic or incompletely spliced subgenomic viral transcripts. The sequence is that of Endogenous retrovirus group K member 6 Rec protein (ERVK-6) from Homo sapiens (Human).